A 102-amino-acid polypeptide reads, in one-letter code: Glutaredoxin 1 (102 aa).

The 96-residue stretch at 1–96 (MNKAILHTII…KLLEGQPKKK (96 aa)) folds into the Glutaredoxin domain. Cys-17 and Cys-20 are joined by a disulfide.

It belongs to the glutaredoxin family. In terms of assembly, monomer.

The protein resides in the cytoplasm. Its function is as follows. Has a glutathione-disulfide oxidoreductase activity in the presence of NADPH and glutathione reductase. Reduces low molecular weight disulfides and proteins. The protein is Glutaredoxin 1 (grxC1) of Rickettsia felis (strain ATCC VR-1525 / URRWXCal2) (Rickettsia azadi).